Here is an 874-residue protein sequence, read N- to C-terminus: Alanine--tRNA ligase (874 aa).

Zn(2+) is bound by residues His562, His566, Cys663, and His667.

It belongs to the class-II aminoacyl-tRNA synthetase family. The cofactor is Zn(2+).

The protein localises to the cytoplasm. It catalyses the reaction tRNA(Ala) + L-alanine + ATP = L-alanyl-tRNA(Ala) + AMP + diphosphate. In terms of biological role, catalyzes the attachment of alanine to tRNA(Ala) in a two-step reaction: alanine is first activated by ATP to form Ala-AMP and then transferred to the acceptor end of tRNA(Ala). Also edits incorrectly charged Ser-tRNA(Ala) and Gly-tRNA(Ala) via its editing domain. This chain is Alanine--tRNA ligase, found in Bordetella parapertussis (strain 12822 / ATCC BAA-587 / NCTC 13253).